Reading from the N-terminus, the 668-residue chain is Threonine--tRNA ligase (668 aa).

Positions 1 to 64 (MSQSVSLTFP…TDGKIEIITR (64 aa)) constitute a TGS domain. The segment at 245 to 553 (DHRKLGREMD…LIENFAGHMP (309 aa)) is catalytic. Zn(2+)-binding residues include C347, H398, and H530.

Belongs to the class-II aminoacyl-tRNA synthetase family. As to quaternary structure, homodimer. Zn(2+) serves as cofactor.

The protein resides in the cytoplasm. It carries out the reaction tRNA(Thr) + L-threonine + ATP = L-threonyl-tRNA(Thr) + AMP + diphosphate + H(+). Catalyzes the attachment of threonine to tRNA(Thr) in a two-step reaction: L-threonine is first activated by ATP to form Thr-AMP and then transferred to the acceptor end of tRNA(Thr). Also edits incorrectly charged L-seryl-tRNA(Thr). The protein is Threonine--tRNA ligase of Rhizobium etli (strain ATCC 51251 / DSM 11541 / JCM 21823 / NBRC 15573 / CFN 42).